The primary structure comprises 433 residues: MNQNFSKKSSNDLINRIIFTIFVLIICRFGSFIPIAGIDAIALGSIAEKNQSGILGMFNMLSGGSLGRMSIFALAIMPYITASIIIQLMSVAYKPLENLKKEGEAGKRKINQLSRYLTVLLASLQAYGVAVSLESIVTNTGPVVIIPGLFFKITTVITLVVGTMLLMWLGEQITQRGIGNGTSLIIFIGIISGVPSAIISMFELSRKGALSPLVAIAVCAGVVILISIIIFFEKAQRKLLVQYPKRQVGNKIYGGDSTYMPLKLNTSGVIPPIFASSILLFPATLANFSSSNSEIMNMLTYYLGHGKPIYILLYVALIMFFSFFYTAIVFNSEETANNLRKYGAYIPGKRPGKNTSEYFDYILTRLTVVGGIYLSVICIIPELLMNKYVISLSLGGTSFLIVVNVVLDTLTQIQTYLFSSKYESLMKKVKLKN.

10 helical membrane-spanning segments follow: residues 17–37, 71–91, 117–137, 141–161, 184–204, 212–232, 268–288, 309–329, 366–386, and 388–408; these read IIFTIFVLIICRFGSFIPIAG, IFALAIMPYITASIIIQLMSV, LTVLLASLQAYGVAVSLESIV, GPVVIIPGLFFKITTVITLVV, LIIFIGIISGVPSAIISMFEL, PLVAIAVCAGVVILISIIIFF, GVIPPIFASSILLFPATLANF, IYILLYVALIMFFSFFYTAIV, LTVVGGIYLSVICIIPELLMN, and YVISLSLGGTSFLIVVNVVLD.

The protein belongs to the SecY/SEC61-alpha family. As to quaternary structure, component of the Sec protein translocase complex. Heterotrimer consisting of SecY, SecE and SecG subunits. The heterotrimers can form oligomers, although 1 heterotrimer is thought to be able to translocate proteins. Interacts with the ribosome. Interacts with SecDF, and other proteins may be involved. Interacts with SecA.

The protein localises to the cell inner membrane. Its function is as follows. The central subunit of the protein translocation channel SecYEG. Consists of two halves formed by TMs 1-5 and 6-10. These two domains form a lateral gate at the front which open onto the bilayer between TMs 2 and 7, and are clamped together by SecE at the back. The channel is closed by both a pore ring composed of hydrophobic SecY resides and a short helix (helix 2A) on the extracellular side of the membrane which forms a plug. The plug probably moves laterally to allow the channel to open. The ring and the pore may move independently. This chain is Protein translocase subunit SecY, found in Rickettsia bellii (strain RML369-C).